A 310-amino-acid polypeptide reads, in one-letter code: Methionyl-tRNA formyltransferase (310 aa).

Ser-109–Pro-112 contributes to the (6S)-5,6,7,8-tetrahydrofolate binding site.

Belongs to the Fmt family.

The enzyme catalyses L-methionyl-tRNA(fMet) + (6R)-10-formyltetrahydrofolate = N-formyl-L-methionyl-tRNA(fMet) + (6S)-5,6,7,8-tetrahydrofolate + H(+). Functionally, attaches a formyl group to the free amino group of methionyl-tRNA(fMet). The formyl group appears to play a dual role in the initiator identity of N-formylmethionyl-tRNA by promoting its recognition by IF2 and preventing the misappropriation of this tRNA by the elongation apparatus. The polypeptide is Methionyl-tRNA formyltransferase (Pseudomonas putida (strain W619)).